The chain runs to 1402 residues: DNA-directed RNA polymerase subunit beta' (1402 aa).

4 residues coordinate Zn(2+): Cys-71, Cys-73, Cys-86, and Cys-89. The Mg(2+) site is built by Asp-462, Asp-464, and Asp-466. Zn(2+) is bound by residues Cys-811, Cys-885, Cys-892, and Cys-895.

Belongs to the RNA polymerase beta' chain family. The RNAP catalytic core consists of 2 alpha, 1 beta, 1 beta' and 1 omega subunit. When a sigma factor is associated with the core the holoenzyme is formed, which can initiate transcription. Requires Mg(2+) as cofactor. The cofactor is Zn(2+).

It carries out the reaction RNA(n) + a ribonucleoside 5'-triphosphate = RNA(n+1) + diphosphate. DNA-dependent RNA polymerase catalyzes the transcription of DNA into RNA using the four ribonucleoside triphosphates as substrates. This is DNA-directed RNA polymerase subunit beta' from Rhizobium johnstonii (strain DSM 114642 / LMG 32736 / 3841) (Rhizobium leguminosarum bv. viciae).